Consider the following 479-residue polypeptide: T-box transcription factor TBX1 (479 aa).

Composition is skewed to low complexity over residues 15–31 and 59–86; these read ASSL…ADPF and YPFA…AAAV. Positions 15 to 86 are disordered; the sequence is ASSLSGLGSP…GPGASRAAAV (72 aa). A DNA-binding region (T-box) is located at residues 108–286; sequence LWDEFNQLGT…SNPFAKGFRD (179 aa). The interval 311-398 is disordered; it reads RNPVASPTQP…APGASEPLHH (88 aa). Polar residues predominate over residues 313 to 322; the sequence is PVASPTQPNG. Basic and acidic residues predominate over residues 323-338; that stretch reads SDKDAAEARREFDRDS. Residues 415 to 426 carry the Nuclear localization signal motif; that stretch reads KSRPAPYPLPGL.

As to quaternary structure, binds DNA as a dimer. Interacts with DSCR6. Interacts with NKX2-5. Expressed in skeletal muscle, lung and testis. Highly expressed in hair follicle stem cell, but not in terminally differentiating cells.

The protein resides in the nucleus. Transcription factor that plays a key role in cardiovascular development by promoting pharyngeal arch segmentation during embryonic development. Also involved in craniofacial muscle development. Together with NKX2-5, acts as a regulator of asymmetric cardiac morphogenesis by promoting expression of PITX2. Acts upstream of TBX1 for the formation of the thymus and parathyroid glands from the third pharyngeal pouch. Required for hair follicle stem cell self-renewal. Binds to the palindromic T site 5'-TTCACACCTAGGTGTGAA-3' DNA sequence. The protein is T-box transcription factor TBX1 of Mus musculus (Mouse).